The sequence spans 969 residues: Translation initiation factor IF-2 (969 aa).

Positions 49–63 (HLRKSHGATDGDKRK) are enriched in basic and acidic residues. Disordered regions lie at residues 49–85 (HLRKSHGATDGDKRKITLTRKHTSEIKQSDATGKART), 100–128 (DDVSDVAEQGQAQVAEADDDAELKRREEE), and 143–380 (LRER…SFQA). Residues 105 to 114 (VAEQGQAQVA) are compositionally biased toward low complexity. Basic and acidic residues predominate over residues 143 to 181 (LRERQERLEREEAERRAREEAAEAERRRAEEEAAAKRAA). The segment covering 182–206 (AEAAAAQQAAQQAAAAQQAAAPADS) has biased composition (low complexity). Positions 209–260 (DEARAAAERAAQREAAKKAEDAAREAAEKARAEQEEIRKRREAAEAEARAIR) are enriched in basic and acidic residues. Low complexity predominate over residues 301–323 (AQARPAAKKPAAAPAATPAPAGA). The segment covering 353–366 (SSGGVDRGWRGGPK) has biased composition (gly residues). A tr-type G domain is found at 469–638 (PRPPVVTVMG…LLQAEVLELK (170 aa)). The segment at 478-485 (GHVDHGKT) is G1. Residue 478–485 (GHVDHGKT) coordinates GTP. The tract at residues 503-507 (GITQH) is G2. The tract at residues 524–527 (DTPG) is G3. Residues 524–528 (DTPGH) and 578–581 (NKID) each bind GTP. The segment at 578–581 (NKID) is G4. Residues 614–616 (SAK) are G5.

This sequence belongs to the TRAFAC class translation factor GTPase superfamily. Classic translation factor GTPase family. IF-2 subfamily.

Its subcellular location is the cytoplasm. In terms of biological role, one of the essential components for the initiation of protein synthesis. Protects formylmethionyl-tRNA from spontaneous hydrolysis and promotes its binding to the 30S ribosomal subunits. Also involved in the hydrolysis of GTP during the formation of the 70S ribosomal complex. This is Translation initiation factor IF-2 from Burkholderia multivorans (strain ATCC 17616 / 249).